Reading from the N-terminus, the 111-residue chain is MRLLFLVLLVLLGLIQYPLWLGKGGWFKVWDLQRQVAAQHETNDGLRARNAALEAEVRDLATGVGAIEERARSELGMMREGEVFVQIVPPGTPVPQPAPGAPGQTASAPRR.

At 1 to 3 the chain is on the cytoplasmic side; it reads MRL. A helical membrane pass occupies residues 4 to 21; sequence LFLVLLVLLGLIQYPLWL. The Periplasmic portion of the chain corresponds to 22-111; the sequence is GKGGWFKVWD…PGQTASAPRR (90 aa). Residues 31–62 are a coiled coil; sequence DLQRQVAAQHETNDGLRARNAALEAEVRDLAT. The segment at 88 to 111 is disordered; sequence VPPGTPVPQPAPGAPGQTASAPRR. Residues 90–100 are compositionally biased toward pro residues; that stretch reads PGTPVPQPAPG. The segment covering 101–111 has biased composition (low complexity); that stretch reads APGQTASAPRR.

The protein belongs to the FtsB family. As to quaternary structure, part of a complex composed of FtsB, FtsL and FtsQ.

The protein localises to the cell inner membrane. Its function is as follows. Essential cell division protein. May link together the upstream cell division proteins, which are predominantly cytoplasmic, with the downstream cell division proteins, which are predominantly periplasmic. The sequence is that of Cell division protein FtsB from Bordetella petrii (strain ATCC BAA-461 / DSM 12804 / CCUG 43448).